Consider the following 462-residue polypeptide: uncharacterized protein (462 aa).

The disordered stretch occupies residues 1–108 (MEDSNTNKDI…NGQDDQDEMD (108 aa)). Residues 36 to 51 (TVERILERKQKERESK) are compositionally biased toward basic and acidic residues. Over residues 64 to 95 (SSPSSLLSSPISSNDNNNNNNNNNNESFDINN) the composition is skewed to low complexity. The stretch at 119 to 150 (LLKRKAALAAKKKESLAEQMKKYNQQYDSIIS) forms a coiled coil. The disordered stretch occupies residues 188 to 208 (SKLQSLNNNTSPSTSSSNLID). Low complexity predominate over residues 190–208 (LQSLNNNTSPSTSSSNLID).

This is an uncharacterized protein from Dictyostelium discoideum (Social amoeba).